Here is a 195-residue protein sequence, read N- to C-terminus: Nucleoside triphosphate pyrophosphatase (195 aa).

The Proton acceptor role is filled by Asp-70.

Belongs to the Maf family. The cofactor is a divalent metal cation.

Its subcellular location is the cytoplasm. The enzyme catalyses a ribonucleoside 5'-triphosphate + H2O = a ribonucleoside 5'-phosphate + diphosphate + H(+). The catalysed reaction is a 2'-deoxyribonucleoside 5'-triphosphate + H2O = a 2'-deoxyribonucleoside 5'-phosphate + diphosphate + H(+). Nucleoside triphosphate pyrophosphatase. May have a dual role in cell division arrest and in preventing the incorporation of modified nucleotides into cellular nucleic acids. This chain is Nucleoside triphosphate pyrophosphatase, found in Synechocystis sp. (strain ATCC 27184 / PCC 6803 / Kazusa).